Consider the following 696-residue polypeptide: Putative zinc metalloproteinase YIL108W (696 aa).

Residue Lys-245 forms a Glycyl lysine isopeptide (Lys-Gly) (interchain with G-Cter in ubiquitin) linkage. His-318 contacts Zn(2+). Residue Glu-319 is part of the active site. The Zn(2+) site is built by His-322 and His-328. The residue at position 361 (Ser-361) is a Phosphoserine. Glycyl lysine isopeptide (Lys-Gly) (interchain with G-Cter in ubiquitin) cross-links involve residues Lys-478, Lys-518, Lys-579, Lys-590, and Lys-596. Residues 522-695 enclose the Jacalin-type lectin domain; the sequence is GIKSPLYGRS…VDAFGIIYGA (174 aa).

Belongs to the peptidase M10B family. Zn(2+) is required as a cofactor.

It is found in the cytoplasm. This is Putative zinc metalloproteinase YIL108W from Saccharomyces cerevisiae (strain ATCC 204508 / S288c) (Baker's yeast).